The following is an 892-amino-acid chain: Putative GTP diphosphokinase RSH1, chloroplastic (892 aa).

The N-terminal 52 residues, 1 to 52 (MQPPTGAVSGSSSSSLECVSSCRTSWRGGGRPYECSVLSCAWNAPRALTGAL), are a transit peptide targeting the chloroplast. In terms of domain architecture, HD spans 184–291 (FIIHPVEVAR…VKLADRLHNM (108 aa)). The TGS domain occupies 574 to 637 (LGSRVFVFTP…ANAEVVEIII (64 aa)). The ACT domain occupies 809–880 (WLCIVCVDRK…MILGVLGWSV (72 aa)).

This sequence belongs to the RelA/SpoT family.

It is found in the plastid. The protein resides in the chloroplast. It carries out the reaction GTP + ATP = guanosine 3'-diphosphate 5'-triphosphate + AMP. Functionally, may be involved in a rapid plant ppGpp (guanosine 3'-diphosphate 5'-diphosphate)-mediated response to pathogens and other stresses. This Oryza sativa subsp. japonica (Rice) protein is Putative GTP diphosphokinase RSH1, chloroplastic (RSH1).